Here is a 457-residue protein sequence, read N- to C-terminus: Ribosomal protein uS12 methylthiotransferase RimO (457 aa).

The MTTase N-terminal domain maps to 6 to 116; that stretch reads PKVGFVSLGC…VMEAVHAALP (111 aa). Positions 15, 51, 80, 147, 151, and 154 each coordinate [4Fe-4S] cluster. The region spanning 133–371 is the Radical SAM core domain; the sequence is LTPRHYAYLK…AKQAQISALR (239 aa). Residues 373 to 441 form the TRAM domain; the sequence is ESKIGSVQQC…EHDLFGDALP (69 aa).

It belongs to the methylthiotransferase family. RimO subfamily. [4Fe-4S] cluster is required as a cofactor.

The protein localises to the cytoplasm. The enzyme catalyses L-aspartate(89)-[ribosomal protein uS12]-hydrogen + (sulfur carrier)-SH + AH2 + 2 S-adenosyl-L-methionine = 3-methylsulfanyl-L-aspartate(89)-[ribosomal protein uS12]-hydrogen + (sulfur carrier)-H + 5'-deoxyadenosine + L-methionine + A + S-adenosyl-L-homocysteine + 2 H(+). In terms of biological role, catalyzes the methylthiolation of an aspartic acid residue of ribosomal protein uS12. This is Ribosomal protein uS12 methylthiotransferase RimO from Xanthomonas axonopodis pv. citri (strain 306).